A 354-amino-acid chain; its full sequence is Methylthioribose-1-phosphate isomerase (354 aa).

Substrate is bound by residues 58 to 60 (RGA), arginine 101, and glutamine 204. The active-site Proton donor is the aspartate 245. 255 to 256 (NK) contacts substrate.

This sequence belongs to the eIF-2B alpha/beta/delta subunits family. MtnA subfamily.

It catalyses the reaction 5-(methylsulfanyl)-alpha-D-ribose 1-phosphate = 5-(methylsulfanyl)-D-ribulose 1-phosphate. The protein operates within amino-acid biosynthesis; L-methionine biosynthesis via salvage pathway; L-methionine from S-methyl-5-thio-alpha-D-ribose 1-phosphate: step 1/6. Functionally, catalyzes the interconversion of methylthioribose-1-phosphate (MTR-1-P) into methylthioribulose-1-phosphate (MTRu-1-P). The protein is Methylthioribose-1-phosphate isomerase of Xanthomonas campestris pv. campestris (strain ATCC 33913 / DSM 3586 / NCPPB 528 / LMG 568 / P 25).